Reading from the N-terminus, the 106-residue chain is Malonate decarboxylase acyl carrier protein (106 aa).

At serine 28 the chain carries O-(phosphoribosyl dephospho-coenzyme A)serine.

The protein belongs to the MdcC family. In terms of processing, covalently binds the prosthetic group of malonate decarboxylase.

The protein resides in the cytoplasm. In terms of biological role, subunit of malonate decarboxylase, it is an acyl carrier protein to which acetyl and malonyl thioester residues are bound via a 2'-(5''-phosphoribosyl)-3'-dephospho-CoA prosthetic group and turn over during the catalytic mechanism. The sequence is that of Malonate decarboxylase acyl carrier protein from Stenotrophomonas maltophilia (strain K279a).